We begin with the raw amino-acid sequence, 75 residues long: Putative sulfur carrier protein MJ0990 (75 aa).

C15 functions as the Cysteine persulfide intermediate in the catalytic mechanism.

The protein belongs to the sulfur carrier protein TusA family.

The sequence is that of Putative sulfur carrier protein MJ0990 from Methanocaldococcus jannaschii (strain ATCC 43067 / DSM 2661 / JAL-1 / JCM 10045 / NBRC 100440) (Methanococcus jannaschii).